We begin with the raw amino-acid sequence, 395 residues long: F-box only protein 7 (395 aa).

The region spanning 19-70 (NHDWSKLCPDILRKIIESLSSLDFYRAKIVCSDWYSVWKTCVKRPLRPWRII) is the F-box domain.

In Arabidopsis thaliana (Mouse-ear cress), this protein is F-box only protein 7 (FBX7).